An 80-amino-acid chain; its full sequence is 17 kDa surface antigen (80 aa).

Over residues 47–58 (ALETTPSGTSIE) the composition is skewed to polar residues. The segment at 47–80 (ALETTPSGTSIEWRNPDNGNYGYVTPSKTYKNST) is disordered.

Belongs to the rickettsiale 17 kDa surface antigen family.

The protein resides in the cell outer membrane. This is 17 kDa surface antigen (omp) from Rickettsia canadensis.